The sequence spans 170 residues: Adenine phosphoribosyltransferase (170 aa).

It belongs to the purine/pyrimidine phosphoribosyltransferase family. As to quaternary structure, homodimer.

It is found in the cytoplasm. It carries out the reaction AMP + diphosphate = 5-phospho-alpha-D-ribose 1-diphosphate + adenine. The protein operates within purine metabolism; AMP biosynthesis via salvage pathway; AMP from adenine: step 1/1. Its function is as follows. Catalyzes a salvage reaction resulting in the formation of AMP, that is energically less costly than de novo synthesis. In Cyanothece sp. (strain PCC 7425 / ATCC 29141), this protein is Adenine phosphoribosyltransferase.